The sequence spans 479 residues: MAQHTVYFPDAFLTQMREAMPSTLSFDDFLAACQRPLRRSIRVNTLKTSVADFLRLTAPYGWTLTPIPWCEEGFWIERDDEDALPLGSTAEHLSGLFYIQEASSMLPVAALFADGNAPQRVMDVAAAPGSKTTQIAARMNNEGAILANEFSASRVKVLHANISRCGISNVALTHFDGRVFGAALPEMFDAILLDAPCSGEGVVRKDPDALKNWSPESNQEIAATQRELIDSAFHALRSGGTLVYSTCTLNREENESVCLWLKETYPDAVEFLPLGDLFPGANKALTEEGFLHVFPQIYDCEGFFVARLRKTQAIPALPTPKYKVGNFPFSPVKDREAAQIRQAAASVGLNWDGNLRLWQRDKEVWLFPVGIEALIGKVRFSRLGIKLAETHNKGYRWQHEAVIALASPDNENAFELTPQEAEEWYRGRDVYPQAAPVADDVLVTFQHQPIGLAKRIGSRLKNSYPRELVRDGKLFTSNA.

S-adenosyl-L-methionine contacts are provided by residues 125 to 131 (AAAPGSK), E149, D176, and D194. C247 serves as the catalytic Nucleophile.

This sequence belongs to the class I-like SAM-binding methyltransferase superfamily. RsmB/NOP family.

The protein resides in the cytoplasm. It catalyses the reaction cytidine(1407) in 16S rRNA + S-adenosyl-L-methionine = 5-methylcytidine(1407) in 16S rRNA + S-adenosyl-L-homocysteine + H(+). Its function is as follows. Specifically methylates the cytosine at position 1407 (m5C1407) of 16S rRNA. The polypeptide is Ribosomal RNA small subunit methyltransferase F (Escherichia coli O157:H7 (strain EC4115 / EHEC)).